A 76-amino-acid polypeptide reads, in one-letter code: Translation initiation factor IF-1 (76 aa).

Residues 1-72 (MAKKDVVVMQ…NKGRIVKREK (72 aa)) form the S1-like domain.

Belongs to the IF-1 family. In terms of assembly, component of the 30S ribosomal translation pre-initiation complex which assembles on the 30S ribosome in the order IF-2 and IF-3, IF-1 and N-formylmethionyl-tRNA(fMet); mRNA recruitment can occur at any time during PIC assembly.

It localises to the cytoplasm. Its function is as follows. One of the essential components for the initiation of protein synthesis. Stabilizes the binding of IF-2 and IF-3 on the 30S subunit to which N-formylmethionyl-tRNA(fMet) subsequently binds. Helps modulate mRNA selection, yielding the 30S pre-initiation complex (PIC). Upon addition of the 50S ribosomal subunit IF-1, IF-2 and IF-3 are released leaving the mature 70S translation initiation complex. This chain is Translation initiation factor IF-1, found in Petrotoga mobilis (strain DSM 10674 / SJ95).